The sequence spans 353 residues: Uroporphyrinogen decarboxylase (353 aa).

Residues 26–30, Asp-75, Tyr-161, Ser-216, and His-332 each bind substrate; that span reads RQAGR.

Belongs to the uroporphyrinogen decarboxylase family. Homodimer.

It localises to the cytoplasm. The catalysed reaction is uroporphyrinogen III + 4 H(+) = coproporphyrinogen III + 4 CO2. The protein operates within porphyrin-containing compound metabolism; protoporphyrin-IX biosynthesis; coproporphyrinogen-III from 5-aminolevulinate: step 4/4. Functionally, catalyzes the decarboxylation of four acetate groups of uroporphyrinogen-III to yield coproporphyrinogen-III. This chain is Uroporphyrinogen decarboxylase, found in Gluconacetobacter diazotrophicus (strain ATCC 49037 / DSM 5601 / CCUG 37298 / CIP 103539 / LMG 7603 / PAl5).